A 799-amino-acid chain; its full sequence is DNA ligase (799 aa).

The span at 1-11 shows a compositional bias: basic and acidic residues; it reads MTEVKTGRVVD. Positions 1 to 35 are disordered; sequence MTEVKTGRVVDDAPVNDAPENNAAEATSPARHDAI. NAD(+) is bound by residues 67 to 71, 116 to 117, and D147; these read DAEYD and SL. K149 serves as the catalytic N6-AMP-lysine intermediate. Positions 170, 207, 327, and 351 each coordinate NAD(+). Residues C445, C448, C463, and C468 each contribute to the Zn(2+) site. Positions 634 to 723 constitute a BRCT domain; the sequence is AIVLPLQGLK…VASVDASEAV (90 aa). A disordered region spans residues 720–799; that stretch reads SEAVAEETPP…RGRAEQLKLF (80 aa). The segment covering 755-767 has biased composition (low complexity); the sequence is GSASGDDSRGAAA. Over residues 787 to 799 the composition is skewed to basic and acidic residues; it reads DVPRGRAEQLKLF.

The protein belongs to the NAD-dependent DNA ligase family. LigA subfamily. The cofactor is Mg(2+). Mn(2+) serves as cofactor.

The catalysed reaction is NAD(+) + (deoxyribonucleotide)n-3'-hydroxyl + 5'-phospho-(deoxyribonucleotide)m = (deoxyribonucleotide)n+m + AMP + beta-nicotinamide D-nucleotide.. Functionally, DNA ligase that catalyzes the formation of phosphodiester linkages between 5'-phosphoryl and 3'-hydroxyl groups in double-stranded DNA using NAD as a coenzyme and as the energy source for the reaction. It is essential for DNA replication and repair of damaged DNA. In Nitratidesulfovibrio vulgaris (strain ATCC 29579 / DSM 644 / CCUG 34227 / NCIMB 8303 / VKM B-1760 / Hildenborough) (Desulfovibrio vulgaris), this protein is DNA ligase.